The primary structure comprises 932 residues: Alanine--tRNA ligase (932 aa).

4 residues coordinate Zn(2+): His-623, His-627, Cys-726, and His-730. The disordered stretch occupies residues Arg-893–Asp-916. A compositionally biased stretch (gly residues) spans Val-894–Pro-910.

It belongs to the class-II aminoacyl-tRNA synthetase family. Zn(2+) serves as cofactor.

It is found in the cytoplasm. It catalyses the reaction tRNA(Ala) + L-alanine + ATP = L-alanyl-tRNA(Ala) + AMP + diphosphate. In terms of biological role, catalyzes the attachment of alanine to tRNA(Ala) in a two-step reaction: alanine is first activated by ATP to form Ala-AMP and then transferred to the acceptor end of tRNA(Ala). Also edits incorrectly charged Ser-tRNA(Ala) and Gly-tRNA(Ala) via its editing domain. The sequence is that of Alanine--tRNA ligase from Natronomonas pharaonis (strain ATCC 35678 / DSM 2160 / CIP 103997 / JCM 8858 / NBRC 14720 / NCIMB 2260 / Gabara) (Halobacterium pharaonis).